A 378-amino-acid chain; its full sequence is B3 domain-containing protein Os03g0622200 (378 aa).

Positions 29–124 form a DNA-binding region, TF-B3 1; that stretch reads SKHFLKHMVG…SFDVLIFDPS (96 aa). Positions 140–159 are disordered; the sequence is GRAENSAGAEQGGRNGRRTP. The segment at residues 256–370 is a DNA-binding region (TF-B3 2); the sequence is FVQVIHSSHV…TMTVHVLRRV (115 aa).

It localises to the nucleus. The polypeptide is B3 domain-containing protein Os03g0622200 (Oryza sativa subsp. japonica (Rice)).